Here is a 208-residue protein sequence, read N- to C-terminus: Protein GrpE (208 aa).

A compositionally biased stretch (basic and acidic residues) spans 1 to 12; the sequence is MTNKDESVEKNT. Residues 1 to 49 are disordered; sequence MTNKDESVEKNTESTVEVTNVKQNIDDSVEQTEESKGHLQDEAIEETSD. Residues 13-23 show a composition bias toward polar residues; that stretch reads ESTVEVTNVKQ.

Belongs to the GrpE family. In terms of assembly, homodimer.

The protein localises to the cytoplasm. Participates actively in the response to hyperosmotic and heat shock by preventing the aggregation of stress-denatured proteins, in association with DnaK and GrpE. It is the nucleotide exchange factor for DnaK and may function as a thermosensor. Unfolded proteins bind initially to DnaJ; upon interaction with the DnaJ-bound protein, DnaK hydrolyzes its bound ATP, resulting in the formation of a stable complex. GrpE releases ADP from DnaK; ATP binding to DnaK triggers the release of the substrate protein, thus completing the reaction cycle. Several rounds of ATP-dependent interactions between DnaJ, DnaK and GrpE are required for fully efficient folding. This chain is Protein GrpE, found in Staphylococcus aureus (strain bovine RF122 / ET3-1).